The chain runs to 388 residues: Succinate--CoA ligase [ADP-forming] subunit beta (388 aa).

The ATP-grasp domain maps to 9–244; sequence KQLFAEYGLP…PSQEDEREAH (236 aa). Residues Lys46, 53–55, Glu99, Ser102, and Glu107 contribute to the ATP site; that span reads GRG. Mg(2+)-binding residues include Asn199 and Asp213. Residues Asn264 and 321 to 323 each bind substrate; that span reads GIV.

It belongs to the succinate/malate CoA ligase beta subunit family. In terms of assembly, heterotetramer of two alpha and two beta subunits. Mg(2+) serves as cofactor.

It carries out the reaction succinate + ATP + CoA = succinyl-CoA + ADP + phosphate. The enzyme catalyses GTP + succinate + CoA = succinyl-CoA + GDP + phosphate. It participates in carbohydrate metabolism; tricarboxylic acid cycle; succinate from succinyl-CoA (ligase route): step 1/1. Succinyl-CoA synthetase functions in the citric acid cycle (TCA), coupling the hydrolysis of succinyl-CoA to the synthesis of either ATP or GTP and thus represents the only step of substrate-level phosphorylation in the TCA. The beta subunit provides nucleotide specificity of the enzyme and binds the substrate succinate, while the binding sites for coenzyme A and phosphate are found in the alpha subunit. This is Succinate--CoA ligase [ADP-forming] subunit beta from Aliivibrio salmonicida (strain LFI1238) (Vibrio salmonicida (strain LFI1238)).